The following is a 442-amino-acid chain: Phosphatidylserine synthase 2 (442 aa).

Over 1–40 (MRRGERRGPAGPLGDGPALGLRRSTESEVYDDGTNTFFWR) the chain is Cytoplasmic. Residues 41–61 (AHTLTVLFILTCALGYVTLLE) form a helical membrane-spanning segment. Topologically, residues 62–74 (ETPQDTAYNTKRG) are lumenal. Residues 75-95 (IVASILVFLCFGVTQAKDGPF) form a helical membrane-spanning segment. Topologically, residues 96-104 (SRPHPAYWR) are cytoplasmic. The helical transmembrane segment at 105-125 (FWLCVSVVYELFLIFILFQTV) threads the bilayer. The Lumenal portion of the chain corresponds to 126-291 (QDGRQFMKYI…EWKPASSLRR (166 aa)). 2 N-linked (GlcNAc...) asparagine glycosylation sites follow: Asn159 and Asn215. Residues 292–312 (WLAVCGIIFVFLLAELNTFYL) form a helical membrane-spanning segment. Lys313 is a topological domain (cytoplasmic). Residues 314-334 (FVLWMPPEHYLVLLRLVFFVN) traverse the membrane as a helical segment. At 335–354 (VGGVAMREIYDFMDDPKFHK) the chain is on the lumenal side. The chain crosses the membrane as a helical span at residues 355–375 (KLGQQAWLVAAITATEFLIVV). The Cytoplasmic segment spans residues 376 to 381 (KYDPYT). Residues 382–402 (LTLSLPFYITQCWILGIILVL) form a helical membrane-spanning segment. Over 403–442 (TWTAWRFFIRDITLRYKEIRRQKQEHKYEKDKCLSNGDGH) the chain is Lumenal.

The protein belongs to the phosphatidyl serine synthase family.

The protein localises to the endoplasmic reticulum membrane. The catalysed reaction is a 1,2-diacyl-sn-glycero-3-phosphoethanolamine + L-serine = a 1,2-diacyl-sn-glycero-3-phospho-L-serine + ethanolamine. It catalyses the reaction 1-hexadecanoyl-2-(9Z-octadecenoyl)-sn-glycero-3-phosphoethanolamine + L-serine = 1-hexadecanoyl-2-(9Z-octadecenoyl)-sn-glycero-3-phospho-L-serine + ethanolamine. It carries out the reaction 1-hexadecanoyl-2-(4Z,7Z,10Z,13Z,16Z,19Z-docosahexaenoyl)-sn-glycero-3-phosphoethanolamine + L-serine = 1-hexadecanoyl-2-(4Z,7Z,10Z,13Z,16Z,19Z-docosahexaenoyl)-sn-glycero-3-phosphoserine + ethanolamine. The enzyme catalyses 1-octadecanoyl-2-(5Z,8Z,11Z,14Z)-eicosatetraenoyl-sn-glycero-3-phosphoethanolamine + L-serine = 1-octadecanoyl-2-(5Z,8Z,11Z,14Z)-eicosatetraenoyl-sn-glycero-3-phosphoserine + ethanolamine. The catalysed reaction is 1-octadecanoyl-2-(4Z,7Z,10Z,13Z,16Z,19Z-docosahexaenoyl)-sn-glycero-3-phosphoethanolamine + L-serine = 1-octadecanoyl-2-(4Z,7Z,10Z,13Z,16Z,19Z-docosahexaenoyl)-sn-glycero-3-phosphoserine + ethanolamine. It catalyses the reaction 1-(1Z-octadecenyl)-2-(4Z,7Z,10Z,13Z,16Z,19Z-docosahexaenoyl)-sn-glycero-3-phosphoethanolamine + L-serine = 1-(1Z-octadecenyl)-2-(4Z,7Z,10Z,13Z,16Z,19Z-docosahexaenoyl)-sn-glycero-3-phospho-L-serine + ethanolamine. It carries out the reaction 1-octadecanoyl-2-(9Z-octadecenoyl)-sn-glycero-3-phosphoethanolamine + L-serine = 1-octadecanoyl-2-(9Z-octadecenoyl)-sn-glycero-3-phospho-L-serine + ethanolamine. The enzyme catalyses 1-(1Z-octadecenyl)-2-(9Z-octadecenoyl)-sn-glycero-3-phosphoethanolamine + L-serine = 1-(1Z-octadecenyl)-2-(9Z-octadecenoyl)-sn-glycero-3-phospho-L-serine + ethanolamine. The catalysed reaction is 1-(1Z-octadecenyl)-2-(5Z,8Z,11Z,14Z- eicosatetraenoyl)-sn-glycero-3-phosphoethanolamine + L-serine = 1-(1Z-octadecenyl)-2-(5Z,8Z,11Z,14Z-eicosatetraenoyl)-sn-glycero-3-phospho-L-serine + ethanolamine. Its pathway is phospholipid metabolism; phosphatidylserine biosynthesis. Its function is as follows. Catalyzes a base-exchange reaction in which the polar head group of phosphatidylethanolamine (PE) or phosphatidylcholine (PC) is replaced by L-serine. Catalyzes the conversion of phosphatatidylethanolamine and does not act on phosphatidylcholine. Can utilize both phosphatidylethanolamine (PE) plasmalogen and diacyl PE as substrate and the latter is six times better utilized, indicating the importance of an ester linkage at the sn-1 position. Although it shows no sn-1 fatty acyl preference, exhibits significant preference towards docosahexaenoic acid (22:6n-3) compared with 18:1 or 20:4 at the sn-2 position. The protein is Phosphatidylserine synthase 2 (PTDSS1) of Gallus gallus (Chicken).